Reading from the N-terminus, the 169-residue chain is Cytochrome c oxidase subunit 4 isoform 1, mitochondrial (169 aa).

Residues 1–22 (MLASRALSLIGKRAISTSVCLR) constitute a mitochondrion transit peptide. Residues 23–99 (AHGSVVKSED…FAEMNRGTNE (77 aa)) are Mitochondrial matrix-facing. N6-acetyllysine; alternate is present on K29. An N6-succinyllysine; alternate modification is found at K29. Phosphoserine is present on residues S56 and S58. K60 is subject to N6-acetyllysine; alternate. K60 is modified (N6-succinyllysine; alternate). Residue K67 is modified to N6-acetyllysine. A helical membrane pass occupies residues 100–125 (WKTVVGMAMFFIGFTALVLIWEKSYV). The Mitochondrial intermembrane portion of the chain corresponds to 126–169 (YGPIPHTFDRDWVAMQTKRMLDMKANPIQGFSAKWDYDKNEWKK).

It belongs to the cytochrome c oxidase IV family. In terms of assembly, component of the cytochrome c oxidase (complex IV, CIV), a multisubunit enzyme composed of 14 subunits. The complex is composed of a catalytic core of 3 subunits MT-CO1, MT-CO2 and MT-CO3, encoded in the mitochondrial DNA, and 11 supernumerary subunits COX4I, COX5A, COX5B, COX6A, COX6B, COX6C, COX7A, COX7B, COX7C, COX8 and NDUFA4, which are encoded in the nuclear genome. The complex exists as a monomer or a dimer and forms supercomplexes (SCs) in the inner mitochondrial membrane with NADH-ubiquinone oxidoreductase (complex I, CI) and ubiquinol-cytochrome c oxidoreductase (cytochrome b-c1 complex, complex III, CIII), resulting in different assemblies (supercomplex SCI(1)III(2)IV(1) and megacomplex MCI(2)III(2)IV(2)). Interacts with PHB2; the interaction decreases in absence of SPHK2. Interacts with AFG1L. Interacts with ABCB7; this interaction allows the regulation of cellular iron homeostasis and cellular reactive oxygen species (ROS) levels in cardiomyocytes. Interacts with FLVCR2; this interaction occurs in the absence of heme and is disrupted upon heme binding. Interacts with IRGC.

It localises to the mitochondrion inner membrane. Its pathway is energy metabolism; oxidative phosphorylation. Functionally, component of the cytochrome c oxidase, the last enzyme in the mitochondrial electron transport chain which drives oxidative phosphorylation. The respiratory chain contains 3 multisubunit complexes succinate dehydrogenase (complex II, CII), ubiquinol-cytochrome c oxidoreductase (cytochrome b-c1 complex, complex III, CIII) and cytochrome c oxidase (complex IV, CIV), that cooperate to transfer electrons derived from NADH and succinate to molecular oxygen, creating an electrochemical gradient over the inner membrane that drives transmembrane transport and the ATP synthase. Cytochrome c oxidase is the component of the respiratory chain that catalyzes the reduction of oxygen to water. Electrons originating from reduced cytochrome c in the intermembrane space (IMS) are transferred via the dinuclear copper A center (CU(A)) of subunit 2 and heme A of subunit 1 to the active site in subunit 1, a binuclear center (BNC) formed by heme A3 and copper B (CU(B)). The BNC reduces molecular oxygen to 2 water molecules using 4 electrons from cytochrome c in the IMS and 4 protons from the mitochondrial matrix. The protein is Cytochrome c oxidase subunit 4 isoform 1, mitochondrial (Cox4i1) of Mus musculus (Mouse).